The following is a 190-amino-acid chain: Small ribosomal subunit protein uS5 (190 aa).

The 64-residue stretch at 19 to 82 (IIDKLVTINR…ERAKRSMIRV (64 aa)) folds into the S5 DRBM domain. A disordered region spans residues 161–190 (SVASRRGKKVSDILGRREPVAGQEGEEAHA). The segment covering 169 to 179 (KVSDILGRREP) has biased composition (basic and acidic residues).

This sequence belongs to the universal ribosomal protein uS5 family. Part of the 30S ribosomal subunit. Contacts proteins S4 and S8.

Functionally, with S4 and S12 plays an important role in translational accuracy. Located at the back of the 30S subunit body where it stabilizes the conformation of the head with respect to the body. This chain is Small ribosomal subunit protein uS5, found in Granulibacter bethesdensis (strain ATCC BAA-1260 / CGDNIH1).